Reading from the N-terminus, the 359-residue chain is Type-1 angiotensin II receptor A (359 aa).

Topologically, residues 1 to 25 (MALNSSTEDGIKRIQDDCPRAGRHS) are extracellular. The N-linked (GlcNAc...) asparagine glycan is linked to asparagine 4. Angiotensin II-binding residues include glutamine 15 and aspartate 17. Disulfide bonds link cysteine 18/cysteine 274 and cysteine 101/cysteine 180. The helical transmembrane segment at 26–55 (YIFVMIPTLYSIIFVVGIFGNSLVVIVIYF) threads the bilayer. At 56-61 (YMKLKT) the chain is on the cytoplasmic side. The helical transmembrane segment at 62 to 89 (VASVFLLNLALADLCFLLTLPLWAVYTA) threads the bilayer. At 90–98 (MEYRWPFGN) the chain is on the extracellular side. The chain crosses the membrane as a helical span at residues 99–125 (HLCKIASASVSFNLYASVFLLTCLSID). Over 126–141 (RYLAIVHPMKSRLRRT) the chain is Cytoplasmic. Residues 142-165 (MLVAKVTCIIIWLMAGLASLPAVI) traverse the membrane as a helical segment. At 166 to 190 (HRNVYFIENTNITVCAFHYESRNST) the chain is on the extracellular side. Arginine 167 provides a ligand contact to angiotensin II. N-linked (GlcNAc...) asparagine glycosylation occurs at asparagine 176. Angiotensin II-binding residues include phenylalanine 182, histidine 183, and tyrosine 184. N-linked (GlcNAc...) asparagine glycosylation is present at asparagine 188. The helical transmembrane segment at 191-216 (LPIGLGLTKNILGFLFPFLIILTSYT) threads the bilayer. Lysine 199 lines the angiotensin II pocket. The Cytoplasmic portion of the chain corresponds to 217 to 239 (LIWKALKKAYEIQKNKPRNDDIF). The helical transmembrane segment at 240 to 268 (RIIMAIVLFFFFSWVPHQIFTFLDVLIQL) threads the bilayer. At 269-278 (GVIHDCKIAD) the chain is on the extracellular side. Residues 279 to 304 (IVDTAMPITICIAYFNNCLNPLFYGF) traverse the membrane as a helical segment. Residues 305–359 (LGKKFKKYFLQLLKYIPPKAKSHSSLSTKMSTLSYRPSDNMSSAAKKPASCSEVE) lie on the Cytoplasmic side of the membrane. The segment covering 335–347 (STLSYRPSDNMSS) has biased composition (polar residues). The segment at 335-359 (STLSYRPSDNMSSAAKKPASCSEVE) is disordered. The S-palmitoyl cysteine moiety is linked to residue cysteine 355.

Belongs to the G-protein coupled receptor 1 family. As to quaternary structure, interacts with MAS1. Interacts with ARRB1. Interacts with FLNA (via filamin repeat 21); increases PKA-mediated phosphorylation of FLNA. Post-translationally, C-terminal Ser or Thr residues may be phosphorylated.

It is found in the cell membrane. Functionally, receptor for angiotensin II, a vasoconstricting peptide, which acts as a key regulator of blood pressure and sodium retention by the kidney. The activated receptor in turn couples to G-alpha proteins G(q) (GNAQ, GNA11, GNA14 or GNA15) and thus activates phospholipase C and increases the cytosolic Ca(2+) concentrations, which in turn triggers cellular responses such as stimulation of protein kinase C. This Mus musculus (Mouse) protein is Type-1 angiotensin II receptor A (Agtr1a).